A 676-amino-acid chain; its full sequence is MKLAACFLTLLPGFAVAASWTSPGFPAFSEQGTGTFVSHAQLPKGTRPLTLNFDQQCWQPADAIKLNQMLSLQPCSNTPPQWRLFRDGEYTLQIDTRSGTPTLMISIQNAAEPVASLVRECPKWDGLPLTVDVSATFPEGAAVRDYYSQQIAIVKNGQIMLQPAATSNGLLLLERAETDTSAPFDWHNATVYFVLTDRFENGDPSNDQSYGRHKDGMAEIGTFHGGDLRGLTNKLDYLQQLGVNALWISAPFEQIHGWVGGGTKGDFPHYAYHGYYTQDWTNLDANMGNEADLRTLVDSAHQRGIRILFDVVMNHTGYATLADMQEYQFGALYLSGDEVKKSLGERWSDWKPAAGQTWHSFNDYINFSDKTGWDKWWGKNWIRTDIGDYDNPGFDDLTMSLAFLPDIKTESTTASGLPVFYKNKMDTHAKAIDGYTPRDYLTHWLSQWVRDYGIDGFRVDTAKHVELPAWQQLKTEASAALREWKKANPDKALDDKPFWMTGEAWGHGVMQSDYYRHGFDAMINFDYQEQAAKAVDCLAQMDTTWQQMAEKLQGFNVLSYLSSHDTRLFREGGDKAAELLLLAPGAVQIFYGDESSRPFGPTGSDPLQGTRSDMNWQDVSGKSAASVAHWQKISQFRARHPAIGAGKQTTLLLKQGYGFVREHGDDKVLVVWAGQQ.

The N-terminal stretch at 1 to 17 (MKLAACFLTLLPGFAVA) is a signal peptide. Cystine bridges form between Cys57/Cys75 and Cys121/Cys537. A Ca(2+)-binding site is contributed by Asn314. The active-site Nucleophile is the Asp460. Position 464 (His464) interacts with Ca(2+). Residue Glu503 is the Proton donor of the active site.

This sequence belongs to the glycosyl hydrolase 13 family. In terms of assembly, monomer. It depends on Ca(2+) as a cofactor.

The protein localises to the periplasm. It carries out the reaction Endohydrolysis of (1-&gt;4)-alpha-D-glucosidic linkages in polysaccharides containing three or more (1-&gt;4)-alpha-linked D-glucose units.. Its function is as follows. Since only maltooligosaccharides up to a chain length of 6 glucose units are actively transported through the cytoplasmic membrane via the membrane-bound complex of three proteins, MalF, MalG, and MalK, longer maltooligosaccharides must first be degraded by the periplasmic alpha-amylase, the MalS protein. The protein is Periplasmic alpha-amylase (malS) of Escherichia coli (strain K12).